Consider the following 836-residue polypeptide: Homeobox-leucine zipper protein ATHB-15 (836 aa).

A DNA-binding region (homeobox) is located at residues 14 to 77 (DNGKYVRYTP…NRRCREKQRK (64 aa)). Residues 72–115 (REKQRKEASRLQAVNRKLTAMNKLLMEENDRLQKQVSQLVHENS) adopt a coiled-coil conformation. Positions 151-379 (RDASPAGLLS…IAQEVTQTNS (229 aa)) constitute an START domain.

The protein belongs to the HD-ZIP homeobox family. Class III subfamily. As to quaternary structure, interacts with ESR1 and ESR2. Interacts with ZPR3. In terms of tissue distribution, highly expressed the developing vascular elements and the adaxial portion of cotyledons. Expressed in developing ovules, stamens and carpels. Expressed in procambium and shoot meristem.

The protein resides in the nucleus. In terms of biological role, probable transcription factor involved in the regulation of meristem development to promote lateral organ formation. May regulates procambial and vascular tissue formation or maintenance, and vascular development in inflorescence stems. This is Homeobox-leucine zipper protein ATHB-15 (ATHB-15) from Arabidopsis thaliana (Mouse-ear cress).